We begin with the raw amino-acid sequence, 61 residues long: MINIVSLVCIYINSVPYSSIFFLDKLPEAYAFLNPIVDIMPVIPLFFFLLAFVWQAAVSFR.

The propeptide occupies 1 to 24 (MINIVSLVCIYINSVPYSSIFFLD). A helical membrane pass occupies residues 36–56 (IVDIMPVIPLFFFLLAFVWQA).

Belongs to the PsbK family. PSII is composed of 1 copy each of membrane proteins PsbA, PsbB, PsbC, PsbD, PsbE, PsbF, PsbH, PsbI, PsbJ, PsbK, PsbL, PsbM, PsbT, PsbX, PsbY, PsbZ, Psb30/Ycf12, at least 3 peripheral proteins of the oxygen-evolving complex and a large number of cofactors. It forms dimeric complexes.

Its subcellular location is the plastid. It is found in the chloroplast thylakoid membrane. One of the components of the core complex of photosystem II (PSII). PSII is a light-driven water:plastoquinone oxidoreductase that uses light energy to abstract electrons from H(2)O, generating O(2) and a proton gradient subsequently used for ATP formation. It consists of a core antenna complex that captures photons, and an electron transfer chain that converts photonic excitation into a charge separation. The protein is Photosystem II reaction center protein K of Lotus japonicus (Lotus corniculatus var. japonicus).